A 201-amino-acid chain; its full sequence is Twist-related protein 1 (201 aa).

Over residues 1–18 (MMQDVSSSPVSPADDSLS) the composition is skewed to low complexity. The segment at 1 to 106 (MMQDVSSSPV…GGGSPQSYEE (106 aa)) is disordered. Residues 34-43 (RGGRKRRSSR) show a composition bias toward basic residues. 2 stretches are compositionally biased toward gly residues: residues 46–65 (AGGGAGPGGAAGGGVGGGDE) and 80–100 (GCGGGGGGGAGGGGSSSGGGS). The 52-residue stretch at 109–160 (TQRVMANVRERQRTQSLNEAFAALPKIIPTLPSDKLSKIQTLKLAARYIDFL) folds into the bHLH domain. Residues 162–190 (QVLQSDELDSKMASYVAHERLSYAFSVWR) form a sufficient for transactivation activity region.

In terms of assembly, efficient DNA binding requires dimerization with another bHLH protein. Homodimer or heterodimer with E proteins such as TCF3. ID1 binds preferentially to TCF3 but does not interact efficiently with TWIST1 so ID1 levels control the amount of TCF3 available to dimerize with TWIST and thus determine the type of dimer formed.

The protein resides in the nucleus. Its function is as follows. Acts as a transcriptional regulator. Inhibits myogenesis by sequestrating E proteins, inhibiting trans-activation by MEF2, and inhibiting DNA-binding by MYOD1 through physical interaction. This interaction probably involves the basic domains of both proteins. Also represses expression of pro-inflammatory cytokines such as TNFA and IL1B. Regulates cranial suture patterning and fusion. Activates transcription as a heterodimer with E proteins. Regulates gene expression differentially, depending on dimer composition. Homodimers induce expression of FGFR2 and POSTN while heterodimers repress FGFR2 and POSTN expression and induce THBS1 expression. Heterodimerization is also required for osteoblast differentiation. Represses the activity of the circadian transcriptional activator: NPAS2-BMAL1 heterodimer. The polypeptide is Twist-related protein 1 (TWIST1) (Pan troglodytes (Chimpanzee)).